Consider the following 195-residue polypeptide: PAP fimbrial minor pilin protein (195 aa).

An N-terminal signal peptide occupies residues 1 to 22 (MRLRFSVPLFFFGCVFVHGVFA). A disulfide bond links Cys58 and Cys97.

This sequence belongs to the fimbrial protein family.

The protein resides in the secreted. It localises to the fimbrium. Functionally, fimbriae (also called pili), polar filaments radiating from the surface of the bacterium to a length of 0.5-1.5 micrometers and numbering 100-300 per cell, enable bacteria to colonize the epithelium of specific host organs. Its function is as follows. PapH seems to anchor the pilus to the bacterial cell. In addition the stoichiometric relationship between PapH and PapA determines the pilus length. The protein is PAP fimbrial minor pilin protein (papH) of Escherichia coli.